We begin with the raw amino-acid sequence, 445 residues long: Na(+)-translocating NADH-quinone reductase subunit A (445 aa).

Belongs to the NqrA family. As to quaternary structure, composed of six subunits; NqrA, NqrB, NqrC, NqrD, NqrE and NqrF.

It carries out the reaction a ubiquinone + n Na(+)(in) + NADH + H(+) = a ubiquinol + n Na(+)(out) + NAD(+). Functionally, NQR complex catalyzes the reduction of ubiquinone-1 to ubiquinol by two successive reactions, coupled with the transport of Na(+) ions from the cytoplasm to the periplasm. NqrA to NqrE are probably involved in the second step, the conversion of ubisemiquinone to ubiquinol. The sequence is that of Na(+)-translocating NADH-quinone reductase subunit A from Marinomonas sp. (strain MWYL1).